Reading from the N-terminus, the 387-residue chain is Phosphoglycerate kinase (387 aa).

Residues 21–23 (DLN), Arg36, and 59–62 (HLGR) contribute to the substrate site. An N6-acetyllysine modification is found at Lys84. Substrate is bound by residues Arg113 and Arg146. ATP is bound by residues Lys197, Glu314, and 340–343 (GGDT).

It belongs to the phosphoglycerate kinase family. Monomer.

The protein resides in the cytoplasm. It catalyses the reaction (2R)-3-phosphoglycerate + ATP = (2R)-3-phospho-glyceroyl phosphate + ADP. Its pathway is carbohydrate degradation; glycolysis; pyruvate from D-glyceraldehyde 3-phosphate: step 2/5. This is Phosphoglycerate kinase (pgk) from Escherichia coli O157:H7.